A 248-amino-acid polypeptide reads, in one-letter code: UPF0280 protein Maeo_0343 (248 aa).

This sequence belongs to the UPF0280 family.

This chain is UPF0280 protein Maeo_0343, found in Methanococcus aeolicus (strain ATCC BAA-1280 / DSM 17508 / OCM 812 / Nankai-3).